A 165-amino-acid chain; its full sequence is Ubiquitin-fold modifier-conjugating enzyme 1 (165 aa).

The Glycyl thioester intermediate role is filled by C117.

This sequence belongs to the ubiquitin-conjugating enzyme family. UFC1 subfamily.

In terms of biological role, E2-like enzyme which forms an intermediate with UFM1 via a thioester linkage. The sequence is that of Ubiquitin-fold modifier-conjugating enzyme 1 from Brugia malayi (Filarial nematode worm).